The chain runs to 353 residues: UPF0283 membrane protein YPA_1696 (353 aa).

Helical transmembrane passes span methionine 71–valine 91, isoleucine 101–valine 121, and glutamate 214–tryptophan 234.

It belongs to the UPF0283 family.

It localises to the cell inner membrane. The polypeptide is UPF0283 membrane protein YPA_1696 (Yersinia pestis bv. Antiqua (strain Antiqua)).